The primary structure comprises 476 residues: Glycogen synthase (476 aa).

Lys-15 contacts ADP-alpha-D-glucose.

Belongs to the glycosyltransferase 1 family. Bacterial/plant glycogen synthase subfamily.

The enzyme catalyses [(1-&gt;4)-alpha-D-glucosyl](n) + ADP-alpha-D-glucose = [(1-&gt;4)-alpha-D-glucosyl](n+1) + ADP + H(+). It participates in glycan biosynthesis; glycogen biosynthesis. In terms of biological role, synthesizes alpha-1,4-glucan chains using ADP-glucose. The polypeptide is Glycogen synthase (Streptococcus equi subsp. equi (strain 4047)).